The following is a 733-amino-acid chain: Zinc finger transcription factor ace1 (733 aa).

Residues 1 to 11 are compositionally biased toward basic residues; that stretch reads MSFSNPRRRTP. Disordered regions lie at residues 1–22, 34–63, and 89–183; these read MSFS…CEHG, GATF…SQSA, and ASLS…SSTT. Residues 39-49 show a composition bias toward low complexity; the sequence is SPTSPSASSAA. Residues 132 to 142 are compositionally biased toward basic residues; the sequence is LRPRSVRRTRN. Polar residues predominate over residues 148–158; sequence GIGSSVVSTND. The span at 171-183 shows a compositional bias: low complexity; sequence ASALTRSAASSTT. 3 C2H2-type zinc fingers span residues 400–424, 428–456, and 463–488; these read KKCR…EKTH, WKCP…NDKH, and YECL…EKAH. Residues 497-533 form a disordered region; the sequence is TNGKKAPSQNGSTAQQTPPLANVSTPSSTPSYSVPTP. Over residues 503 to 515 the composition is skewed to polar residues; that stretch reads PSQNGSTAQQTPP. Over residues 519 to 530 the composition is skewed to low complexity; that stretch reads VSTPSSTPSYSV.

Its subcellular location is the nucleus. Binds to the promoter of the cbh1 gene and activates transcription. The protein is Zinc finger transcription factor ace1 (ace1) of Hypocrea jecorina (Trichoderma reesei).